The sequence spans 504 residues: Anthocyanidin 3-O-glucoside 5-O-glucosyltransferase (504 aa).

Residue His-23 is the Proton acceptor of the active site. Position 23 (His-23) interacts with an anthocyanidin. The tract at residues 107–126 (TKKGQGQGQGQGQGQGQGQG) is disordered. A compositionally biased stretch (gly residues) spans 111 to 125 (QGQGQGQGQGQGQGQ). UDP-alpha-D-glucose contacts are provided by Thr-157, Gln-377, His-392, Trp-395, Asn-396, Ser-397, Glu-400, Asp-416, and Gln-417.

This sequence belongs to the UDP-glycosyltransferase family. In terms of tissue distribution, predominantly expressed in petals and weakly in filaments. Not expressed in leaves, stems and other floral organs.

The catalysed reaction is an anthocyanidin 3-O-beta-D-glucoside + UDP-alpha-D-glucose = an anthocyanidin 3,5-di-O-beta-D-glucoside + UDP + 2 H(+). The protein operates within pigment biosynthesis; anthocyanin biosynthesis. Its function is as follows. Catalyzes the glucosylation at the O-5 position of anthocyanidin 3-glucosides to form anthocyanidin 3,5-di-O-glucosides using UDP-glucose as sugar donor. Anthocyanidin 3,5-di-O-glucosides are molecules that are responsible for pigmentation. Involved in biosynsthesis of accumulate gentiodelphin, a unique polyacylated delphinidin-type anthocyanin, in the petals. Also acts on anthocyanidin 3-O-(6-O-malonylglucoside). Much less active with hydroxycinnamoylglucose derivatives. No activity in the absence of the 3-O-glucoside group. The chain is Anthocyanidin 3-O-glucoside 5-O-glucosyltransferase (5GT7) from Gentiana triflora (Clustered gentian).